Here is a 355-residue protein sequence, read N- to C-terminus: Peptide chain release factor 1 (355 aa).

Gln-231 carries the N5-methylglutamine modification. The span at Leu-283 to Ser-292 shows a compositional bias: basic and acidic residues. Residues Leu-283–Tyr-306 are disordered.

The protein belongs to the prokaryotic/mitochondrial release factor family. In terms of processing, methylated by PrmC. Methylation increases the termination efficiency of RF1.

It is found in the cytoplasm. In terms of biological role, peptide chain release factor 1 directs the termination of translation in response to the peptide chain termination codons UAG and UAA. The protein is Peptide chain release factor 1 of Campylobacter concisus (strain 13826).